A 226-amino-acid chain; its full sequence is GTP-binding nuclear protein Ran (226 aa).

The 182-residue stretch at 3–184 (DPISFKVILV…LSILRTLLND (182 aa)) folds into the Small GTPase Ran-type domain. 14 to 21 (DGATGKTT) is a GTP binding site. The tract at residues 33-41 (KQYISTIGV) is switch-I. Residues G70, 135-138 (NKCD), and 163-165 (SAK) each bind GTP. The interval 70 to 86 (GQEKFGGLRDGYYVDSD) is switch-II.

This sequence belongs to the small GTPase superfamily. Ran family. Found in a nuclear export complex with RanGTP, exportin and pre-miRNA.

It localises to the nucleus. Its function is as follows. GTP-binding protein involved in nucleocytoplasmic transport. Required for the import of protein into the nucleus and also for RNA export. Involved in chromatin condensation and control of cell cycle. This chain is GTP-binding nuclear protein Ran, found in Giardia intestinalis (Giardia lamblia).